A 171-amino-acid chain; its full sequence is MSALTRFAQSRLAWTLLLLTAVGLEACALFFQHVMKLDPCVMCIYQRLAVLGVLTAGLIGVVGHQFRLLRFLGVLLWGVSAAWGLKLALELVEMQTNPSPFSTCSFLPEFPEWMPLHEWFPSVFLPTGMCTDIPWEMFGITMSQWMVVAFSTYLIALVVFIVPALMPTKKA.

Topologically, residues 1-13 (MSALTRFAQSRLA) are cytoplasmic. A helical transmembrane segment spans residues 14 to 30 (WTLLLLTAVGLEACALF). Over 31–48 (FQHVMKLDPCVMCIYQRL) the chain is Periplasmic. Cys-40 and Cys-43 are joined by a disulfide. Residues 49–64 (AVLGVLTAGLIGVVGH) traverse the membrane as a helical segment. The Cytoplasmic segment spans residues 65–71 (QFRLLRF). A helical transmembrane segment spans residues 72–89 (LGVLLWGVSAAWGLKLAL). Over 90–144 (ELVEMQTNPSPFSTCSFLPEFPEWMPLHEWFPSVFLPTGMCTDIPWEMFGITMSQ) the chain is Periplasmic. A disulfide bridge connects residues Cys-104 and Cys-130. Residues 145–163 (WMVVAFSTYLIALVVFIVP) form a helical membrane-spanning segment. Residues 164–171 (ALMPTKKA) lie on the Cytoplasmic side of the membrane.

It belongs to the DsbB family.

It localises to the cell inner membrane. Required for disulfide bond formation in some periplasmic proteins. Acts by oxidizing the DsbA protein. In Shewanella loihica (strain ATCC BAA-1088 / PV-4), this protein is Disulfide bond formation protein B.